Here is a 353-residue protein sequence, read N- to C-terminus: 3-deoxy-D-manno-octulosonic acid transferase (353 aa).

Residue E31 is the Proton acceptor of the active site. Residues 211 to 212, 247 to 249, and 273 to 276 contribute to the CMP site; these read PR, FGI, and NLLE.

It belongs to the glycosyltransferase group 1 family. Glycosyltransferase 30 subfamily. As to quaternary structure, can form homodimer, homotrimer and homotetramer.

It is found in the cell inner membrane. The catalysed reaction is lipid IVA (E. coli) + CMP-3-deoxy-beta-D-manno-octulosonate = alpha-Kdo-(2-&gt;6)-lipid IVA (E. coli) + CMP + H(+). It functions in the pathway bacterial outer membrane biogenesis; LPS core biosynthesis. Its function is as follows. Involved in lipopolysaccharide (LPS) biosynthesis. Catalyzes the transfer of a single 3-deoxy-D-manno-octulosonate (Kdo) residue from CMP-Kdo to lipid IV(A), the tetraacyldisaccharide-1,4'-bisphosphate precursor of lipid A. Is strictly monofunctional, i.e. is capable of adding only a single Kdo residue to the acceptor lipid. The protein is 3-deoxy-D-manno-octulosonic acid transferase (kdtA) of Aquifex aeolicus (strain VF5).